We begin with the raw amino-acid sequence, 223 residues long: Small ribosomal subunit protein uS3 (223 aa).

A KH type-2 domain is found at 39-108; that stretch reads IRNFVKKNSY…NILINIVEVK (70 aa).

This sequence belongs to the universal ribosomal protein uS3 family. In terms of assembly, part of the 30S ribosomal subunit. Forms a tight complex with proteins S10 and S14.

Binds the lower part of the 30S subunit head. Binds mRNA in the 70S ribosome, positioning it for translation. The polypeptide is Small ribosomal subunit protein uS3 (Clostridium botulinum (strain 657 / Type Ba4)).